Reading from the N-terminus, the 272-residue chain is U11/U12 small nuclear ribonucleoprotein 35 kDa protein (272 aa).

One can recognise an RRM domain in the interval 51–129; sequence LTLFVSRLSP…REVFVDFELE (79 aa). Composition is skewed to basic and acidic residues over residues 146-162 and 190-272; these read GKKESGQLRFGGRDRPF and RDRS…EHNR. Residues 146–272 form a disordered region; that stretch reads GKKESGQLRF…RKHRSDEHNR (127 aa). The stretch at 221–258 forms a coiled coil; sequence TKDDKEQNAEHTKRERSREQAKNDKDKEKKDSKRERSR.

The protein localises to the nucleus. This chain is U11/U12 small nuclear ribonucleoprotein 35 kDa protein (snrnp35), found in Xenopus laevis (African clawed frog).